Reading from the N-terminus, the 298-residue chain is Elongation factor Ts (298 aa).

The tract at residues 79–82 (TDFV) is involved in Mg(2+) ion dislocation from EF-Tu.

It belongs to the EF-Ts family.

Its subcellular location is the cytoplasm. Functionally, associates with the EF-Tu.GDP complex and induces the exchange of GDP to GTP. It remains bound to the aminoacyl-tRNA.EF-Tu.GTP complex up to the GTP hydrolysis stage on the ribosome. This Cereibacter sphaeroides (strain ATCC 17025 / ATH 2.4.3) (Rhodobacter sphaeroides) protein is Elongation factor Ts.